A 146-amino-acid polypeptide reads, in one-letter code: Large ribosomal subunit protein uL15 (146 aa).

The interval 1-54 is disordered; the sequence is MKLHELQPAAGSRKAPKRVGRGTGSGLGRNAGKGEKGQNARSGGGVRPGFEGGQ. Composition is skewed to gly residues over residues 21-31 and 42-52; these read RGTGSGLGRNA and SGGGVRPGFEG.

The protein belongs to the universal ribosomal protein uL15 family. Part of the 50S ribosomal subunit.

Its function is as follows. Binds to the 23S rRNA. This is Large ribosomal subunit protein uL15 from Clostridium botulinum (strain Alaska E43 / Type E3).